Reading from the N-terminus, the 513-residue chain is Maturase K (513 aa).

Belongs to the intron maturase 2 family. MatK subfamily.

The protein resides in the plastid. The protein localises to the chloroplast. Usually encoded in the trnK tRNA gene intron. Probably assists in splicing its own and other chloroplast group II introns. This Molinia caerulea (Purple moor-grass) protein is Maturase K.